The sequence spans 135 residues: Probable histone H2A.1 (135 aa).

This sequence belongs to the histone H2A family. The nucleosome is a histone octamer containing two molecules each of H2A, H2B, H3 and H4 assembled in one H3-H4 heterotetramer and two H2A-H2B heterodimers. The octamer wraps approximately 147 bp of DNA.

The protein resides in the nucleus. Its subcellular location is the chromosome. Core component of nucleosome. Nucleosomes wrap and compact DNA into chromatin, limiting DNA accessibility to the cellular machineries which require DNA as a template. Histones thereby play a central role in transcription regulation, DNA repair, DNA replication and chromosomal stability. DNA accessibility is regulated via a complex set of post-translational modifications of histones, also called histone code, and nucleosome remodeling. This is Probable histone H2A.1 from Oryza sativa subsp. japonica (Rice).